A 276-amino-acid chain; its full sequence is NADPH-dependent 7-cyano-7-deazaguanine reductase (276 aa).

83-85 (IES) contributes to the substrate binding site. 85–86 (SK) is an NADPH binding site. Residue cysteine 184 is the Thioimide intermediate of the active site. Residue aspartate 191 is the Proton donor of the active site. A substrate-binding site is contributed by 223–224 (HE). NADPH is bound at residue 252 to 253 (RG).

The protein belongs to the GTP cyclohydrolase I family. QueF type 2 subfamily. As to quaternary structure, homodimer.

It localises to the cytoplasm. The catalysed reaction is 7-aminomethyl-7-carbaguanine + 2 NADP(+) = 7-cyano-7-deazaguanine + 2 NADPH + 3 H(+). It functions in the pathway tRNA modification; tRNA-queuosine biosynthesis. Functionally, catalyzes the NADPH-dependent reduction of 7-cyano-7-deazaguanine (preQ0) to 7-aminomethyl-7-deazaguanine (preQ1). This chain is NADPH-dependent 7-cyano-7-deazaguanine reductase, found in Pseudomonas paraeruginosa (strain DSM 24068 / PA7) (Pseudomonas aeruginosa (strain PA7)).